The sequence spans 559 residues: T-complex protein 1 subunit gamma (559 aa).

An intrachain disulfide couples cysteine 369 to cysteine 375. The disordered stretch occupies residues 537–559; sequence GGASVTDGNGQEIPETFGDARDG.

This sequence belongs to the TCP-1 chaperonin family. Heterooligomeric complex of about 850 to 900 kDa that forms two stacked rings, 12 to 16 nm in diameter.

It is found in the cytoplasm. Molecular chaperone; assists the folding of proteins upon ATP hydrolysis. Known to play a role, in vitro, in the folding of actin and tubulin. The protein is T-complex protein 1 subunit gamma of Tetrahymena pyriformis.